The chain runs to 167 residues: MMLTIIMLSKIFMSSLISMILTIYLNNIFNSPSMLLIYLISYSIYMSLMMFTMCSMNSLLILMILIVFLSGMLIMFSYFISLINEPLKLKMKPFIQTLFLIIITMKIYNKLSQNEHYFNYFKNIDLMYLYMKMNSTLFFIMILMLIITLILMTKITYIEKKTLRKKK.

4 helical membrane-spanning segments follow: residues 5-25, 34-54, 60-80, and 138-158; these read IIML…TIYL, MLLI…FTMC, LILM…SYFI, and FFIM…ITYI.

Belongs to the complex I subunit 6 family.

Its subcellular location is the mitochondrion membrane. It catalyses the reaction a ubiquinone + NADH + 5 H(+)(in) = a ubiquinol + NAD(+) + 4 H(+)(out). Functionally, core subunit of the mitochondrial membrane respiratory chain NADH dehydrogenase (Complex I) that is believed to belong to the minimal assembly required for catalysis. Complex I functions in the transfer of electrons from NADH to the respiratory chain. The immediate electron acceptor for the enzyme is believed to be ubiquinone. In Apis mellifera ligustica (Common honeybee), this protein is NADH-ubiquinone oxidoreductase chain 6 (ND6).